The following is a 676-amino-acid chain: Nicastrin (676 aa).

Positions 1 to 28 (MAMGLIRLLSIAFTLVLLSILPLHLSLA) are cleaved as a signal peptide. Over 29-644 (DEITSIESVP…VYTVQHSAYD (616 aa)) the chain is Extracellular. Asparagine 58, asparagine 336, asparagine 371, asparagine 444, asparagine 480, asparagine 555, and asparagine 611 each carry an N-linked (GlcNAc...) asparagine glycan. Residues 645–665 (NAVLVAGITVTTLAYIGILAA) traverse the membrane as a helical segment. Topologically, residues 666–676 (KSIITKALKQD) are cytoplasmic.

The protein belongs to the nicastrin family. Probable component of the gamma-secretase complex, a complex composed of a presenilin homodimer, nicastrin, APH1 and PEN2.

It is found in the membrane. In terms of biological role, probable subunit of the gamma-secretase complex, an endoprotease complex that catalyzes the intramembrane cleavage of integral membrane proteins such as Notch. The chain is Nicastrin from Arabidopsis thaliana (Mouse-ear cress).